The primary structure comprises 160 residues: Protein D14 (160 aa).

This chain is Protein D14 (D14), found in Escherichia phage T5 (Enterobacteria phage T5).